Consider the following 206-residue polypeptide: Ribosomal RNA large subunit methyltransferase E (206 aa).

Residues glycine 60, tryptophan 62, aspartate 80, aspartate 96, and aspartate 121 each contribute to the S-adenosyl-L-methionine site. The Proton acceptor role is filled by lysine 161.

This sequence belongs to the class I-like SAM-binding methyltransferase superfamily. RNA methyltransferase RlmE family.

It is found in the cytoplasm. The catalysed reaction is uridine(2552) in 23S rRNA + S-adenosyl-L-methionine = 2'-O-methyluridine(2552) in 23S rRNA + S-adenosyl-L-homocysteine + H(+). Its function is as follows. Specifically methylates the uridine in position 2552 of 23S rRNA at the 2'-O position of the ribose in the fully assembled 50S ribosomal subunit. This is Ribosomal RNA large subunit methyltransferase E from Stutzerimonas stutzeri (strain A1501) (Pseudomonas stutzeri).